The following is a 195-amino-acid chain: Recombination protein RecR (195 aa).

The C4-type zinc finger occupies 53 to 68 (CSVCFNIDVKSPCSIC). In terms of domain architecture, Toprim spans 76 to 171 (QLLCIVEELG…KITRLACGIP (96 aa)).

The protein belongs to the RecR family.

In terms of biological role, may play a role in DNA repair. It seems to be involved in an RecBC-independent recombinational process of DNA repair. It may act with RecF and RecO. The polypeptide is Recombination protein RecR (Ehrlichia canis (strain Jake)).